The following is a 402-amino-acid chain: Multidrug resistance protein MdtH (402 aa).

11 consecutive transmembrane segments (helical) span residues 13 to 33, 45 to 65, 99 to 116, 139 to 159, 165 to 185, 214 to 234, 244 to 264, 277 to 297, 300 to 322, 340 to 360, and 368 to 388; these read YFLLIDNMLVVLGFFVVFPLI, ALMVGIALGLRQFIQQGLGIF, PWLLWFSCFLSGLGGTLF, LLMMQDSAGAVTGALLGSWLL, LVCATGAVLFVLCAAFNAWLL, VLTLAGYYMLAVQVMLMLPIM, AVKWMYAIEACLSLTLLYPIA, LMAGLLLMSLSMLPVGLVGNL, LFTLICTFYIGSVIAEPARETLS, LGLAIGGAIGYIGGGWLFDMG, and LPWMMLGVIGIMTFLALGWQF.

This sequence belongs to the major facilitator superfamily. DHA1 family. MdtH (TC 2.A.1.2.21) subfamily.

It is found in the cell inner membrane. The sequence is that of Multidrug resistance protein MdtH from Citrobacter koseri (strain ATCC BAA-895 / CDC 4225-83 / SGSC4696).